The following is a 477-amino-acid chain: MAKLIPLYQYAGQDLGIMGLGKSGMATARALAGTGTRVHAWDDSPILRDAARAESVPLCDLTDQTSRTSPWPALQGVVWSPGIPHTFPQPHPVAVIAHERGVPLFCDIDLLARARQDCFFLGITGTNGKSTTTALIGHILKAARHPVQVGGNLGTPALSFEPLPFHGTYVLELSSYQLELVPSLCCDVAVLLNITPDHLARHGGMDGYIAAKRQIFRCGPRPGVAVVCIDDEPSLAIHDALCRENGRKVVAVSTRALPRGGVGAVDGQLVDATQGRPRAVADLTTIATLPGAHNWQNAAAAYAACRQHGIDAKIIVEAMASFPGLPHRQELVAEIDGVRFINDSKATNADAADKALRCYDTVYWIAGGQPKEGGIVSLEPHFHRMRQAYLIGQAAPAFERTLKGKVPLSQVGTLTRAVTEAAKAAWRDAIPGAVVLLSPACASWDQFSSFEHRGDIFRELVADLAHTRAAAKPGGRR.

Gly125 to Thr131 contributes to the ATP binding site.

Belongs to the MurCDEF family.

The protein resides in the cytoplasm. It carries out the reaction UDP-N-acetyl-alpha-D-muramoyl-L-alanine + D-glutamate + ATP = UDP-N-acetyl-alpha-D-muramoyl-L-alanyl-D-glutamate + ADP + phosphate + H(+). The protein operates within cell wall biogenesis; peptidoglycan biosynthesis. In terms of biological role, cell wall formation. Catalyzes the addition of glutamate to the nucleotide precursor UDP-N-acetylmuramoyl-L-alanine (UMA). This Rhodospirillum rubrum (strain ATCC 11170 / ATH 1.1.1 / DSM 467 / LMG 4362 / NCIMB 8255 / S1) protein is UDP-N-acetylmuramoylalanine--D-glutamate ligase.